The following is a 336-amino-acid chain: PTS system glucitol/sorbitol-specific EIIB component (336 aa).

The 193-residue stretch at 3-195 (KYNAIKIVKG…AVQSMITTIL (193 aa)) folds into the PTS EIIB type-5 domain. Catalysis depends on Cys-75, which acts as the Phosphocysteine intermediate; for EIIB activity. Residue Cys-75 is modified to Phosphocysteine; by EIIA. Helical transmembrane passes span 194–214 (ILPF…SGFG), 228–248 (GIGL…ALLG), 250–270 (GAVI…KGTI), 278–298 (ALFA…LGLA), and 312–332 (VLYS…VASI).

It is found in the cell membrane. It catalyses the reaction D-sorbitol(out) + N(pros)-phospho-L-histidyl-[protein] = D-sorbitol 6-phosphate(in) + L-histidyl-[protein]. Functionally, the phosphoenolpyruvate-dependent sugar phosphotransferase system (sugar PTS), a major carbohydrate active transport system, catalyzes the phosphorylation of incoming sugar substrates concomitantly with their translocation across the cell membrane. The enzyme II complex composed of SrlA, SrlB and SrlE is involved in glucitol/sorbitol transport. The protein is PTS system glucitol/sorbitol-specific EIIB component (srlE) of Clostridium beijerinckii (strain ATCC 51743 / NCIMB 8052) (Clostridium acetobutylicum).